The chain runs to 386 residues: Succinate--CoA ligase [ADP-forming] subunit beta (386 aa).

Residues 9–244 (KEILRKYGVP…HDEEDPLETR (236 aa)) enclose the ATP-grasp domain. ATP is bound by residues Lys-46, 53–55 (GRG), Glu-99, Cys-102, and Glu-107. The Mg(2+) site is built by Asn-199 and Asp-213. Residues Asn-264 and 321 to 323 (GIM) contribute to the substrate site.

Belongs to the succinate/malate CoA ligase beta subunit family. In terms of assembly, heterotetramer of two alpha and two beta subunits. Requires Mg(2+) as cofactor.

The catalysed reaction is succinate + ATP + CoA = succinyl-CoA + ADP + phosphate. It catalyses the reaction GTP + succinate + CoA = succinyl-CoA + GDP + phosphate. The protein operates within carbohydrate metabolism; tricarboxylic acid cycle; succinate from succinyl-CoA (ligase route): step 1/1. Its function is as follows. Succinyl-CoA synthetase functions in the citric acid cycle (TCA), coupling the hydrolysis of succinyl-CoA to the synthesis of either ATP or GTP and thus represents the only step of substrate-level phosphorylation in the TCA. The beta subunit provides nucleotide specificity of the enzyme and binds the substrate succinate, while the binding sites for coenzyme A and phosphate are found in the alpha subunit. The sequence is that of Succinate--CoA ligase [ADP-forming] subunit beta from Rickettsia felis (strain ATCC VR-1525 / URRWXCal2) (Rickettsia azadi).